A 295-amino-acid polypeptide reads, in one-letter code: Probable cell division protein WhiA (295 aa).

Positions 262 to 293 (SLRELGKKLNLTKSQIYSKLKRIIKIAERFGD) form a DNA-binding region, H-T-H motif.

Belongs to the WhiA family.

Functionally, involved in cell division and chromosome segregation. The sequence is that of Probable cell division protein WhiA from Thermotoga maritima (strain ATCC 43589 / DSM 3109 / JCM 10099 / NBRC 100826 / MSB8).